The chain runs to 383 residues: Anhydro-N-acetylmuramic acid kinase (383 aa).

9 to 16 (GTSLDGID) contributes to the ATP binding site.

Belongs to the anhydro-N-acetylmuramic acid kinase family.

The enzyme catalyses 1,6-anhydro-N-acetyl-beta-muramate + ATP + H2O = N-acetyl-D-muramate 6-phosphate + ADP + H(+). It participates in amino-sugar metabolism; 1,6-anhydro-N-acetylmuramate degradation. It functions in the pathway cell wall biogenesis; peptidoglycan recycling. Catalyzes the specific phosphorylation of 1,6-anhydro-N-acetylmuramic acid (anhMurNAc) with the simultaneous cleavage of the 1,6-anhydro ring, generating MurNAc-6-P. Is required for the utilization of anhMurNAc either imported from the medium or derived from its own cell wall murein, and thus plays a role in cell wall recycling. This is Anhydro-N-acetylmuramic acid kinase from Bacillus cereus (strain ATCC 10987 / NRS 248).